Consider the following 101-residue polypeptide: Threonine-rich inner membrane protein GfcA (101 aa).

Positions 1–21 are cleaved as a signal peptide; it reads MKHKLSAILMAFMLTTPAAFA. The Cytoplasmic portion of the chain corresponds to 22-59; it reads APEATNGTEATTGTTGTTTTTTGATTTATTTGGVAAGA. The tract at residues 24 to 45 is disordered; that stretch reads EATNGTEATTGTTGTTTTTTGA. The chain crosses the membrane as a helical span at residues 60–80; the sequence is VGTATVVGVATAVGVATLAVV. Residues 81–101 lie on the Periplasmic side of the membrane; sequence AANDSGDGGSHNTSTTTSTTR. The segment at 82–101 is disordered; it reads ANDSGDGGSHNTSTTTSTTR.

It is found in the cell inner membrane. The chain is Threonine-rich inner membrane protein GfcA (gfcA) from Escherichia coli (strain K12).